The primary structure comprises 1212 residues: DNA-directed RNA polymerase subunit beta' (1212 aa).

Zn(2+) contacts are provided by Cys60, Cys62, Cys75, and Cys78. Mg(2+)-binding residues include Asp450, Asp452, and Asp454. Residues Cys819, Cys893, Cys900, and Cys903 each coordinate Zn(2+).

This sequence belongs to the RNA polymerase beta' chain family. In terms of assembly, the RNAP catalytic core consists of 2 alpha, 1 beta, 1 beta' and 1 omega subunit. When a sigma factor is associated with the core the holoenzyme is formed, which can initiate transcription. Requires Mg(2+) as cofactor. The cofactor is Zn(2+).

The catalysed reaction is RNA(n) + a ribonucleoside 5'-triphosphate = RNA(n+1) + diphosphate. Its function is as follows. DNA-dependent RNA polymerase catalyzes the transcription of DNA into RNA using the four ribonucleoside triphosphates as substrates. This chain is DNA-directed RNA polymerase subunit beta', found in Streptococcus thermophilus (strain ATCC BAA-491 / LMD-9).